The sequence spans 140 residues: Transmembrane protein 234 homolog (140 aa).

4 helical membrane passes run 14–34 (IYAV…NPFI), 64–84 (WQYL…VLTL), 88–108 (ELSL…AITA), and 116–136 (SGWK…ICGL).

This sequence belongs to the TMEM234 family.

The protein resides in the membrane. The chain is Transmembrane protein 234 homolog from Anopheles gambiae (African malaria mosquito).